The following is a 151-amino-acid chain: Transcriptional regulator MraZ (151 aa).

SpoVT-AbrB domains lie at 5 to 52 (ATAV…PLMN) and 81 to 124 (ATEC…SDVE).

This sequence belongs to the MraZ family. Forms oligomers.

It localises to the cytoplasm. The protein localises to the nucleoid. The protein is Transcriptional regulator MraZ of Haemophilus influenzae (strain PittGG).